We begin with the raw amino-acid sequence, 356 residues long: Peptide chain release factor 1 (356 aa).

Glutamine 233 is subject to N5-methylglutamine.

It belongs to the prokaryotic/mitochondrial release factor family. In terms of processing, methylated by PrmC. Methylation increases the termination efficiency of RF1.

The protein resides in the cytoplasm. Its function is as follows. Peptide chain release factor 1 directs the termination of translation in response to the peptide chain termination codons UAG and UAA. The protein is Peptide chain release factor 1 of Oceanobacillus iheyensis (strain DSM 14371 / CIP 107618 / JCM 11309 / KCTC 3954 / HTE831).